Here is a 431-residue protein sequence, read N- to C-terminus: ATP-dependent protease ATPase subunit HslU (431 aa).

ATP contacts are provided by residues V18, 60–65 (GVGKTE), D244, E309, and R381.

This sequence belongs to the ClpX chaperone family. HslU subfamily. In terms of assembly, a double ring-shaped homohexamer of HslV is capped on each side by a ring-shaped HslU homohexamer. The assembly of the HslU/HslV complex is dependent on binding of ATP.

Its subcellular location is the cytoplasm. ATPase subunit of a proteasome-like degradation complex; this subunit has chaperone activity. The binding of ATP and its subsequent hydrolysis by HslU are essential for unfolding of protein substrates subsequently hydrolyzed by HslV. HslU recognizes the N-terminal part of its protein substrates and unfolds these before they are guided to HslV for hydrolysis. The chain is ATP-dependent protease ATPase subunit HslU from Caulobacter sp. (strain K31).